Here is a 162-residue protein sequence, read N- to C-terminus: uncharacterized protein (162 aa).

To R.meliloti R02472.

This is an uncharacterized protein from Escherichia coli (strain K12).